The primary structure comprises 310 residues: Methionyl-tRNA formyltransferase (310 aa).

Position 109–112 (109–112) interacts with (6S)-5,6,7,8-tetrahydrofolate; the sequence is SLLP.

It belongs to the Fmt family.

The catalysed reaction is L-methionyl-tRNA(fMet) + (6R)-10-formyltetrahydrofolate = N-formyl-L-methionyl-tRNA(fMet) + (6S)-5,6,7,8-tetrahydrofolate + H(+). Functionally, attaches a formyl group to the free amino group of methionyl-tRNA(fMet). The formyl group appears to play a dual role in the initiator identity of N-formylmethionyl-tRNA by promoting its recognition by IF2 and preventing the misappropriation of this tRNA by the elongation apparatus. This chain is Methionyl-tRNA formyltransferase, found in Chloroflexus aurantiacus (strain ATCC 29366 / DSM 635 / J-10-fl).